Reading from the N-terminus, the 154-residue chain is Superoxide dismutase [Cu-Zn] (154 aa).

3 residues coordinate Cu cation: H47, H49, and H64. A disulfide bridge links C58 with C147. The Zn(2+) site is built by H64, H72, H81, and D84. Residue H121 participates in Cu cation binding. Positions D125–L136 are enriched in basic and acidic residues. Residues D125 to R144 are disordered. Residue R144 participates in substrate binding.

This sequence belongs to the Cu-Zn superoxide dismutase family. As to quaternary structure, homodimer. It depends on Cu cation as a cofactor. Requires Zn(2+) as cofactor.

It is found in the cytoplasm. The enzyme catalyses 2 superoxide + 2 H(+) = H2O2 + O2. In terms of biological role, destroys radicals which are normally produced within the cells and which are toxic to biological systems. The sequence is that of Superoxide dismutase [Cu-Zn] (SOD1) from Candida glabrata (strain ATCC 2001 / BCRC 20586 / JCM 3761 / NBRC 0622 / NRRL Y-65 / CBS 138) (Yeast).